Reading from the N-terminus, the 831-residue chain is Glucan 1,3-beta-glucosidase D (831 aa).

Basic and acidic residues predominate over residues 1–21 (MPSQSRSRDRYGRDSDRDRSR). Disordered stretches follow at residues 1–246 (MPSQ…RGQS) and 261–288 (APDM…SDGS). The Cytoplasmic portion of the chain corresponds to 1–300 (MPSQSRSRDR…LTPFWKRKKW (300 aa)). Over residues 32–41 (EDDDDDDDFD) the composition is skewed to acidic residues. 3 stretches are compositionally biased toward basic and acidic residues: residues 42–70 (DNPR…HDDY), 78–94 (EPRR…ERAR), and 151–177 (DAAR…HKST). Over residues 178–195 (DSSNSSAGLLNANALAKL) the composition is skewed to low complexity. 2 stretches are compositionally biased toward basic and acidic residues: residues 197–216 (AQHE…EAKA) and 275–286 (PPRERRWEKDSD). A helical; Signal-anchor for type II membrane protein transmembrane segment spans residues 301-321 (WWIGAIVLVIVVIIIVVAVVV). Residues 322–831 (SNNKKSDSDS…PSFGNLPEYY (510 aa)) are Extracellular-facing. A disordered region spans residues 325 to 360 (KKSDSDSDSDSNSGSSDSWGGDKSSLNGLDHDSIPK). A compositionally biased stretch (low complexity) spans 334 to 350 (DSNSGSSDSWGGDKSSL). Residues Asn379, Asn396, and Asn547 are each glycosylated (N-linked (GlcNAc...) asparagine). Glu598 functions as the Proton donor in the catalytic mechanism. N-linked (GlcNAc...) asparagine glycosylation is found at Asn611, Asn637, Asn670, and Asn690. Catalysis depends on Glu703, which acts as the Nucleophile.

Belongs to the glycosyl hydrolase 5 (cellulase A) family.

It is found in the cell membrane. It catalyses the reaction Successive hydrolysis of beta-D-glucose units from the non-reducing ends of (1-&gt;3)-beta-D-glucans, releasing alpha-glucose.. Functionally, glucosidase involved in the degradation of cellulosic biomass. Active on lichenan. The chain is Glucan 1,3-beta-glucosidase D (exgD) from Emericella nidulans (strain FGSC A4 / ATCC 38163 / CBS 112.46 / NRRL 194 / M139) (Aspergillus nidulans).